The chain runs to 939 residues: Intimin (939 aa).

A signal peptide spans 1–41 (MITHGFYARTRHKHKLKKTFIMLSAGLGLFFYVNQNSFANG). Residues 40–153 (NGENYFKLGS…KLTKMSPDVT (114 aa)) form a peptidoglycan-binding region. Residues 40–153 (NGENYFKLGS…KLTKMSPDVT (114 aa)) form a sufficient for homodimerization region. The segment at 40–212 (NGENYFKLGS…LQAWLQHYGT (173 aa)) is required for periplasmic localization. The region spanning 63–112 (LFYTLKTGETVADLSKSQDINLSTIWSLNKHLYSSESEMMKAAPGQQIIL) is the LysM domain. Positions 189 to 430 (DTALGIAGNQ…PQYVNELRTL (242 aa)) are inverse autotransporter. The interval 402-411 (LYSMQFRYQF) is signature sequence for beta-barrel assembly machinery (BAM), which recognizes the unfolded beta-barrel in the periplasm. 2 consecutive Big-1 domains span residues 560 to 653 (VTDF…VIFV) and 660 to 751 (ITEI…VEFF). The segment at 750-939 (FFTTLTIDDG…ESNAYATCVK (190 aa)) is required and sufficient for interaction with intimin receptor Tir. Residues 842–939 (LIVPNMSKRV…ESNAYATCVK (98 aa)) are C-type lectin domain. Residues 842-939 (LIVPNMSKRV…ESNAYATCVK (98 aa)) form an intimin receptor Tir-binding region. Residues Cys-860 and Cys-937 are joined by a disulfide bond.

It belongs to the intimin/invasin family. As to quaternary structure, homodimer. Interacts with Tir.

It localises to the cell outer membrane. Functionally, an inverse autotransporter. Adhesin, which mediates attachment to the human intestine epithelial cells. Necessary for the production of attaching and effacing lesions on infected human tissue culture cells. Anchored to the outer membrane by binding to peptidoglycan (PGN) via its periplasmic domain, thus helping in receptor interactions during host invasion. PGN-binding may also aid in resisting mechanical and chemical stress during transit of the bacterium through the gastrointestinal tract of the host. Periplasmic domain binds purified E.coli PGN sacculi under acidic conditions in vitro and in vivo, but does not bind to chitin. Periplasmic domain binds PGN sacculi with an apparent dissociation constant (Kd) of 0.8 uM. No binding to PGN in vitro at normal physiological pH 7.4. The sequence is that of Intimin from Escherichia coli O127:H6 (strain E2348/69 / EPEC).